A 207-amino-acid chain; its full sequence is Mediator of RNA polymerase II transcription subunit 21 (207 aa).

Residues 37–121 (PHPDVPDAAP…PDSPRTFASR (85 aa)) are disordered. Residues 65–80 (PVPAQSQASPPAQNPA) are compositionally biased toward low complexity. The span at 84-96 (AGAGTSVGEGGQT) shows a compositional bias: gly residues. The segment covering 97–108 (PGPAAGAGADPN) has biased composition (low complexity). Residues 146–196 (IDSSEAEQEKRIRELEGELRRVEEERELKMRELKRLRRTLENVLRAVETGL) are a coiled coil.

Belongs to the Mediator complex subunit 21 family. As to quaternary structure, component of the Mediator complex.

It localises to the nucleus. Its function is as follows. Component of the Mediator complex, a coactivator involved in the regulated transcription of nearly all RNA polymerase II-dependent genes. Mediator functions as a bridge to convey information from gene-specific regulatory proteins to the basal RNA polymerase II transcription machinery. Mediator is recruited to promoters by direct interactions with regulatory proteins and serves as a scaffold for the assembly of a functional preinitiation complex with RNA polymerase II and the general transcription factors. This Neosartorya fischeri (strain ATCC 1020 / DSM 3700 / CBS 544.65 / FGSC A1164 / JCM 1740 / NRRL 181 / WB 181) (Aspergillus fischerianus) protein is Mediator of RNA polymerase II transcription subunit 21 (srb7).